A 199-amino-acid chain; its full sequence is Superoxide dismutase [Mn/Fe] (199 aa).

Residues histidine 27, histidine 81, aspartate 161, and histidine 165 each coordinate Fe(3+). The Mn(2+) site is built by histidine 27, histidine 81, aspartate 161, and histidine 165.

Belongs to the iron/manganese superoxide dismutase family. Homodimer. Requires Mn(2+) as cofactor. Fe(3+) is required as a cofactor.

It carries out the reaction 2 superoxide + 2 H(+) = H2O2 + O2. In terms of biological role, destroys superoxide anion radicals which are normally produced within the cells and which are toxic to biological systems. Catalyzes the dismutation of superoxide anion radicals into O2 and H2O2 by successive reduction and oxidation of the transition metal ion at the active site. The chain is Superoxide dismutase [Mn/Fe] (sodA) from Staphylococcus epidermidis.